Consider the following 23-residue polypeptide: Basic phospholipase A2 CB2 (23 aa).

Ca(2+) is required as a cofactor. Contains 7 disulfide bonds. Expressed by the venom gland.

Its subcellular location is the secreted. The catalysed reaction is a 1,2-diacyl-sn-glycero-3-phosphocholine + H2O = a 1-acyl-sn-glycero-3-phosphocholine + a fatty acid + H(+). Snake venom phospholipase A2 (PLA2) that shows presynaptic neurotoxicity. PLA2 catalyzes the calcium-dependent hydrolysis of the 2-acyl groups in 3-sn-phosphoglycerides. The chain is Basic phospholipase A2 CB2 from Crotalus durissus cumanensis (South American rattlesnake).